Consider the following 171-residue polypeptide: ATP synthase subunit b (171 aa).

Residues 26-46 form a helical membrane-spanning segment; that stretch reads INLVLVIALLVYFLKGFLGGI.

Belongs to the ATPase B chain family. In terms of assembly, F-type ATPases have 2 components, F(1) - the catalytic core - and F(0) - the membrane proton channel. F(1) has five subunits: alpha(3), beta(3), gamma(1), delta(1), epsilon(1). F(0) has four main subunits: a(1), b(1), b'(1) and c(10-14). The alpha and beta chains form an alternating ring which encloses part of the gamma chain. F(1) is attached to F(0) by a central stalk formed by the gamma and epsilon chains, while a peripheral stalk is formed by the delta, b and b' chains.

The protein resides in the cellular thylakoid membrane. Functionally, f(1)F(0) ATP synthase produces ATP from ADP in the presence of a proton or sodium gradient. F-type ATPases consist of two structural domains, F(1) containing the extramembraneous catalytic core and F(0) containing the membrane proton channel, linked together by a central stalk and a peripheral stalk. During catalysis, ATP synthesis in the catalytic domain of F(1) is coupled via a rotary mechanism of the central stalk subunits to proton translocation. Its function is as follows. Component of the F(0) channel, it forms part of the peripheral stalk, linking F(1) to F(0). The sequence is that of ATP synthase subunit b from Synechococcus sp. (strain RCC307).